The primary structure comprises 947 residues: Protein translocase subunit SecA 1 (947 aa).

Residues glutamine 87, 105–109 (GEGKT), and aspartate 525 each bind ATP. Residues 907–937 (DDADKAARDPNRPETWGKVGRNEDCPCNSGK) form a disordered region. The span at 908–918 (DADKAARDPNR) shows a compositional bias: basic and acidic residues. 4 residues coordinate Zn(2+): cysteine 931, cysteine 933, cysteine 942, and histidine 943.

This sequence belongs to the SecA family. Monomer and homodimer. Part of the essential Sec protein translocation apparatus which comprises SecA, SecYEG and auxiliary proteins SecDF-YajC and YidC. It depends on Zn(2+) as a cofactor.

The protein localises to the cell inner membrane. Its subcellular location is the cytoplasm. It carries out the reaction ATP + H2O + cellular proteinSide 1 = ADP + phosphate + cellular proteinSide 2.. Part of the Sec protein translocase complex. Interacts with the SecYEG preprotein conducting channel. Has a central role in coupling the hydrolysis of ATP to the transfer of proteins into and across the cell membrane, serving both as a receptor for the preprotein-SecB complex and as an ATP-driven molecular motor driving the stepwise translocation of polypeptide chains across the membrane. In Rhodopseudomonas palustris (strain BisA53), this protein is Protein translocase subunit SecA 1.